Here is a 413-residue protein sequence, read N- to C-terminus: Serine hydroxymethyltransferase (413 aa).

Residues Leu-119 and 123-125 each bind (6S)-5,6,7,8-tetrahydrofolate; that span reads GHL. At Lys-228 the chain carries N6-(pyridoxal phosphate)lysine. 351–353 is a (6S)-5,6,7,8-tetrahydrofolate binding site; sequence SPF.

This sequence belongs to the SHMT family. Homodimer. Pyridoxal 5'-phosphate is required as a cofactor.

The protein localises to the cytoplasm. It carries out the reaction (6R)-5,10-methylene-5,6,7,8-tetrahydrofolate + glycine + H2O = (6S)-5,6,7,8-tetrahydrofolate + L-serine. The protein operates within one-carbon metabolism; tetrahydrofolate interconversion. It functions in the pathway amino-acid biosynthesis; glycine biosynthesis; glycine from L-serine: step 1/1. Its function is as follows. Catalyzes the reversible interconversion of serine and glycine with tetrahydrofolate (THF) serving as the one-carbon carrier. This reaction serves as the major source of one-carbon groups required for the biosynthesis of purines, thymidylate, methionine, and other important biomolecules. Also exhibits THF-independent aldolase activity toward beta-hydroxyamino acids, producing glycine and aldehydes, via a retro-aldol mechanism. The chain is Serine hydroxymethyltransferase from Clostridium botulinum (strain 657 / Type Ba4).